We begin with the raw amino-acid sequence, 207 residues long: ATP synthase subunit b 2 (207 aa).

The chain crosses the membrane as a helical span at residues 53–72 (TYASQLLWLVITFSVFYLLM).

The protein belongs to the ATPase B chain family. F-type ATPases have 2 components, F(1) - the catalytic core - and F(0) - the membrane proton channel. F(1) has five subunits: alpha(3), beta(3), gamma(1), delta(1), epsilon(1). F(0) has three main subunits: a(1), b(2) and c(10-14). The alpha and beta chains form an alternating ring which encloses part of the gamma chain. F(1) is attached to F(0) by a central stalk formed by the gamma and epsilon chains, while a peripheral stalk is formed by the delta and b chains.

Its subcellular location is the cell inner membrane. In terms of biological role, f(1)F(0) ATP synthase produces ATP from ADP in the presence of a proton or sodium gradient. F-type ATPases consist of two structural domains, F(1) containing the extramembraneous catalytic core and F(0) containing the membrane proton channel, linked together by a central stalk and a peripheral stalk. During catalysis, ATP synthesis in the catalytic domain of F(1) is coupled via a rotary mechanism of the central stalk subunits to proton translocation. Component of the F(0) channel, it forms part of the peripheral stalk, linking F(1) to F(0). The b'-subunit is a diverged and duplicated form of b found in plants and photosynthetic bacteria. In Rhizobium etli (strain CIAT 652), this protein is ATP synthase subunit b 2 (atpF2).